A 227-amino-acid chain; its full sequence is UPF0173 metal-dependent hydrolase BCAH187_A4741 (227 aa).

The protein belongs to the UPF0173 family.

This chain is UPF0173 metal-dependent hydrolase BCAH187_A4741, found in Bacillus cereus (strain AH187).